We begin with the raw amino-acid sequence, 341 residues long: MKALSKLKAEEGIWMTDVPEPEVGHNDLLIKIRKTAICGTDVHIYNWDDWSQKTIPVPMVVGHEYVGEVVGIGQEVKGFKIGDRVSGEGHITCGHCRNCRGGRTHLCRNTTGVGVNRPGCFAEYLVIPAFNAFKIPDNISDDLASIFDPFGNAVHTALSFDLVGEDVLVSGAGPIGVMAAAVAKHVGARHVVITDVNEYRLELARKMGVTRAVNVAKESLNDVMAELGMTEGFDVGLEMSGAPPAFRTMLDTMNHGGRIAMLGIPPSDMSIDWTKVIFKGLFIKGIYGREMFETWYKMAALIQSGLDLSPIITHRFSIDDFQKGFDAMRSGQSGKVILSWD.

Cys-38 serves as a coordination point for Zn(2+). Catalysis depends on charge relay system residues Thr-40 and His-43. Zn(2+)-binding residues include His-63, Glu-64, Cys-93, Cys-96, Cys-99, and Cys-107. NAD(+) is bound by residues Ile-175, Asp-195, Arg-200, Leu-262–Ile-264, and Ile-286–Tyr-287.

The protein belongs to the zinc-containing alcohol dehydrogenase family. In terms of assembly, homotetramer. It depends on Zn(2+) as a cofactor.

It localises to the cytoplasm. The catalysed reaction is L-threonine + NAD(+) = (2S)-2-amino-3-oxobutanoate + NADH + H(+). Its pathway is amino-acid degradation; L-threonine degradation via oxydo-reductase pathway; glycine from L-threonine: step 1/2. Catalyzes the NAD(+)-dependent oxidation of L-threonine to 2-amino-3-ketobutyrate. In Salmonella choleraesuis (strain SC-B67), this protein is L-threonine 3-dehydrogenase.